We begin with the raw amino-acid sequence, 75 residues long: UPF0235 protein Mvan_2846 (75 aa).

This sequence belongs to the UPF0235 family.

This chain is UPF0235 protein Mvan_2846, found in Mycolicibacterium vanbaalenii (strain DSM 7251 / JCM 13017 / BCRC 16820 / KCTC 9966 / NRRL B-24157 / PYR-1) (Mycobacterium vanbaalenii).